The primary structure comprises 365 residues: Aminomethyltransferase (365 aa).

The protein belongs to the GcvT family. In terms of assembly, the glycine cleavage system is composed of four proteins: P, T, L and H.

It catalyses the reaction N(6)-[(R)-S(8)-aminomethyldihydrolipoyl]-L-lysyl-[protein] + (6S)-5,6,7,8-tetrahydrofolate = N(6)-[(R)-dihydrolipoyl]-L-lysyl-[protein] + (6R)-5,10-methylene-5,6,7,8-tetrahydrofolate + NH4(+). Its function is as follows. The glycine cleavage system catalyzes the degradation of glycine. This is Aminomethyltransferase from Bacillus pumilus (strain SAFR-032).